The chain runs to 378 residues: 1-acyl-sn-glycerol-3-phosphate acyltransferase delta (378 aa).

Residues 11–31 (FLCHLVFCYVFIASGLIINTI) form a helical membrane-spanning segment. Positions 96–101 (HKFEID) match the HXXXXD motif motif. The next 3 membrane-spanning stretches (helical) occupy residues 125-145 (ELAY…VFCS), 307-327 (TLVN…QFLV), and 338-358 (LASF…MIGV).

Belongs to the 1-acyl-sn-glycerol-3-phosphate acyltransferase family. Widely expressed with highest levels in skeletal muscle, followed by heart, liver, prostate and thymus.

It is found in the endoplasmic reticulum membrane. The catalysed reaction is a 1-acyl-sn-glycero-3-phosphate + an acyl-CoA = a 1,2-diacyl-sn-glycero-3-phosphate + CoA. It carries out the reaction (4Z,7Z,10Z,13Z,16Z,19Z)-docosahexaenoyl-CoA + 1-hexadecanoyl-sn-glycero-3-phosphate = 1-hexadecanoyl-2-(4Z,7Z,10Z,13Z,16Z,19Z-docosahexaenoyl)-sn-glycero-3-phosphate + CoA. It catalyses the reaction 1-octadecanoyl-sn-glycero-3-phosphate + (9Z,12Z)-octadecadienoyl-CoA = 1-octadecanoyl-2-(9Z,12Z-octadecadienoyl)-sn-glycero-3-phosphate + CoA. The enzyme catalyses 1-octadecanoyl-sn-glycero-3-phosphate + (4Z,7Z,10Z,13Z,16Z,19Z)-docosahexaenoyl-CoA = 1-octadecanoyl-2-(4Z,7Z,10Z,13Z,16Z,19Z-docosahexaenoyl)-sn-glycero-3-phosphate + CoA. The catalysed reaction is (4Z,7Z,10Z,13Z,16Z,19Z)-docosahexaenoyl-CoA + 1-(9Z-octadecenoyl)-sn-glycero-3-phosphate = 1-(9Z-octadecenoyl)-2-(4Z,7Z,10Z,13Z,16Z,19Z-docosahexaenoyl)-sn-glycero-3-phosphate + CoA. Its pathway is phospholipid metabolism; CDP-diacylglycerol biosynthesis; CDP-diacylglycerol from sn-glycerol 3-phosphate: step 2/3. Functionally, converts 1-acyl-sn-glycerol-3-phosphate (lysophosphatidic acid or LPA) into 1,2-diacyl-sn-glycerol-3-phosphate (phosphatidic acid or PA) by incorporating an acyl moiety at the sn-2 position of the glycerol backbone. Exhibits high acyl-CoA specificity for polyunsaturated fatty acyl-CoA, especially docosahexaenoyl-CoA (22:6-CoA, DHA-CoA). The protein is 1-acyl-sn-glycerol-3-phosphate acyltransferase delta (AGPAT4) of Homo sapiens (Human).